Here is a 1001-residue protein sequence, read N- to C-terminus: Kinesin-like protein KIN-14P (1001 aa).

Residues 53–172 form the Calponin-homology (CH) domain; sequence AIRRYEAANW…CVLSLRSFSE (120 aa). A compositionally biased stretch (basic and acidic residues) spans 284–300; it reads NESVKHALDPNDDKLLS. Residues 284-322 form a disordered region; it reads NESVKHALDPNDDKLLSRADTPPEMESTCTCSTGNMDEE. The Kinesin motor domain maps to 426–748; sequence NIRVYCRVRP…LKFAERVATV (323 aa). Residue 509–516 coordinates ATP; the sequence is GQTGSGKT. Positions 756–784 form a coiled coil; that stretch reads NKEGGEVKELKEQIACLKAALAKKDGETE. Disordered stretches follow at residues 804 to 830 and 890 to 1001; these read PPAF…QKKR and EPQW…SAKK. Over residues 972-984 the composition is skewed to polar residues; the sequence is PSASTKNGKQLSL.

Belongs to the TRAFAC class myosin-kinesin ATPase superfamily. Kinesin family. KIN-14 subfamily.

This Oryza sativa subsp. japonica (Rice) protein is Kinesin-like protein KIN-14P.